Here is a 539-residue protein sequence, read N- to C-terminus: Phosphoenolpyruvate carboxykinase (ATP) (539 aa).

Substrate-binding residues include arginine 61, tyrosine 195, and lysine 201. ATP is bound by residues lysine 201, histidine 220, and 238–246 (GLSGTGKTT). Mn(2+)-binding residues include lysine 201 and histidine 220. Aspartate 259 provides a ligand contact to Mn(2+). The ATP site is built by glutamate 287, arginine 325, and threonine 450. Residue arginine 325 participates in substrate binding.

The protein belongs to the phosphoenolpyruvate carboxykinase (ATP) family. Mn(2+) serves as cofactor.

Its subcellular location is the cytoplasm. It carries out the reaction oxaloacetate + ATP = phosphoenolpyruvate + ADP + CO2. Its pathway is carbohydrate biosynthesis; gluconeogenesis. Involved in the gluconeogenesis. Catalyzes the conversion of oxaloacetate (OAA) to phosphoenolpyruvate (PEP) through direct phosphoryl transfer between the nucleoside triphosphate and OAA. The sequence is that of Phosphoenolpyruvate carboxykinase (ATP) from Methylobacterium radiotolerans (strain ATCC 27329 / DSM 1819 / JCM 2831 / NBRC 15690 / NCIMB 10815 / 0-1).